We begin with the raw amino-acid sequence, 357 residues long: Aspartate carbamoyltransferase catalytic subunit (357 aa).

The span at 1 to 17 shows a compositional bias: polar residues; sequence MSNSIDSQSIPTISPTD. The segment at 1–21 is disordered; that stretch reads MSNSIDSQSIPTISPTDYTKF. Arg-97 and Thr-98 together coordinate carbamoyl phosphate. Position 125 (Lys-125) interacts with L-aspartate. Positions 147, 177, and 180 each coordinate carbamoyl phosphate. 2 residues coordinate L-aspartate: Arg-211 and Arg-266. Carbamoyl phosphate is bound by residues Gly-307 and Pro-308.

This sequence belongs to the aspartate/ornithine carbamoyltransferase superfamily. ATCase family. In terms of assembly, heterododecamer (2C3:3R2) of six catalytic PyrB chains organized as two trimers (C3), and six regulatory PyrI chains organized as three dimers (R2).

It catalyses the reaction carbamoyl phosphate + L-aspartate = N-carbamoyl-L-aspartate + phosphate + H(+). The protein operates within pyrimidine metabolism; UMP biosynthesis via de novo pathway; (S)-dihydroorotate from bicarbonate: step 2/3. In terms of biological role, catalyzes the condensation of carbamoyl phosphate and aspartate to form carbamoyl aspartate and inorganic phosphate, the committed step in the de novo pyrimidine nucleotide biosynthesis pathway. In Psychrobacter arcticus (strain DSM 17307 / VKM B-2377 / 273-4), this protein is Aspartate carbamoyltransferase catalytic subunit.